Consider the following 465-residue polypeptide: uncharacterized protein (465 aa).

An RAMA domain is found at 6 to 91 (NVTLSNLIDF…LKLKREYLFR (86 aa)). 2 disordered regions span residues 95-377 (TGKN…SNNQ) and 392-465 (YNQQ…KSKS). Residues 117–137 (PQQQQQQQQQQQQQQQQQQQP) show a composition bias toward low complexity. Acidic residues predominate over residues 156-169 (ETSDQDIDNDDDDA). Residues 177 to 190 (TTTTTTTTTTTTTT) are compositionally biased toward low complexity. A compositionally biased stretch (basic and acidic residues) spans 208-220 (PKEKKKEKKENIL). Residues 214-242 (EKKENILTKKKQQSLQYQQQLQLLQRQNS) are a coiled coil. Over residues 226-263 (QSLQYQQQLQLLQRQNSPPSVSPSSSTSTSSSTSSPAS) the composition is skewed to low complexity. Over residues 264–294 (NQIFNSFGPNSQNHNQYGINYNSQQHQPQQY) the composition is skewed to polar residues. Over residues 295 to 376 (NNNNNNNNNN…NNNINNNSNN (82 aa)) the composition is skewed to low complexity. A compositionally biased stretch (polar residues) spans 392-407 (YNQQNPPKHQYPNNFL). The span at 424 to 442 (NQSQNQNQNQNQNQNQNQK) shows a compositional bias: low complexity. A compositionally biased stretch (basic residues) spans 443-465 (SKSKSKSKSKFKSKSKSKSKSKS).

This is an uncharacterized protein from Dictyostelium discoideum (Social amoeba).